We begin with the raw amino-acid sequence, 259 residues long: Bisphosphoglycerate mutase (259 aa).

At Ser-2 the chain carries N-acetylserine. Substrate contacts are provided by residues 10-17 (RHGEGAWN), 23-24 (CS), Arg-62, 89-92 (ERHY), Arg-100, and 116-117 (RR). The Tele-phosphohistidine intermediate role is filled by His-11. Catalysis depends on Glu-89, which acts as the Proton donor/acceptor. At Thr-122 the chain carries Phosphothreonine. 189 to 190 (GN) lines the substrate pocket.

Belongs to the phosphoglycerate mutase family. BPG-dependent PGAM subfamily. In terms of assembly, homodimer.

The enzyme catalyses (2R)-3-phospho-glyceroyl phosphate = (2R)-2,3-bisphosphoglycerate + H(+). The catalysed reaction is (2R)-2-phosphoglycerate = (2R)-3-phosphoglycerate. With respect to regulation, at alkaline pH BPGM favors the synthase reaction; however, at lower pH the phosphatase reaction is dominant. Inhibited by citrate. Its function is as follows. Plays a major role in regulating hemoglobin oxygen affinity by controlling the levels of its allosteric effector 2,3-bisphosphoglycerate (2,3-BPG). Also exhibits mutase (EC 5.4.2.11) activity. In Bos taurus (Bovine), this protein is Bisphosphoglycerate mutase (BPGM).